The primary structure comprises 237 residues: Ribosomal RNA small subunit methyltransferase G (237 aa).

S-adenosyl-L-methionine is bound by residues G78, F83, 129 to 130 (AE), and R148. The interval 218 to 237 (KKETPNKYPRKAGMPNKRPL) is disordered.

Belongs to the methyltransferase superfamily. RNA methyltransferase RsmG family.

Its subcellular location is the cytoplasm. In terms of biological role, specifically methylates the N7 position of a guanine in 16S rRNA. The chain is Ribosomal RNA small subunit methyltransferase G from Streptococcus pneumoniae serotype 19F (strain G54).